A 292-amino-acid chain; its full sequence is 4-hydroxybenzoate solanesyltransferase (292 aa).

Transmembrane regions (helical) follow at residues 28–48, 49–69, 97–117, 118–138, 140–160, 172–192, 217–237, 239–259, and 272–292; these read LILM…LPPL, PLLG…CVVN, VGIG…FYLT, PLSF…PGAK, VFPV…LISW, WVLW…YAMA, VGIF…ILML, PLYW…YIQL, and IFGQ…LGWL.

This sequence belongs to the UbiA prenyltransferase family. Requires Mg(2+) as cofactor.

The protein resides in the cell inner membrane. The catalysed reaction is all-trans-nonaprenyl diphosphate + 4-hydroxybenzoate = 4-hydroxy-3-(all-trans-nonaprenyl)benzoate + diphosphate. In terms of biological role, catalyzes the prenylation of para-hydroxybenzoate (PHB) with an all-trans polyprenyl group. Mediates the second step in the final reaction sequence of plastoquinone-9 (PQ-9) biosynthesis, which is the condensation of the polyisoprenoid side chain with PHB, generating the first membrane-bound Q intermediate 4-hydroxy-3-solanesylbenzoate. The polypeptide is 4-hydroxybenzoate solanesyltransferase (Synechocystis sp. (strain ATCC 27184 / PCC 6803 / Kazusa)).